Here is a 315-residue protein sequence, read N- to C-terminus: Ribonuclease Z (315 aa).

Histidine 62, histidine 64, aspartate 66, histidine 67, histidine 144, aspartate 215, and histidine 273 together coordinate Zn(2+). The active-site Proton acceptor is aspartate 66.

The protein belongs to the RNase Z family. As to quaternary structure, homodimer. Zn(2+) is required as a cofactor.

It catalyses the reaction Endonucleolytic cleavage of RNA, removing extra 3' nucleotides from tRNA precursor, generating 3' termini of tRNAs. A 3'-hydroxy group is left at the tRNA terminus and a 5'-phosphoryl group is left at the trailer molecule.. Its function is as follows. Zinc phosphodiesterase, which displays some tRNA 3'-processing endonuclease activity. Probably involved in tRNA maturation, by removing a 3'-trailer from precursor tRNA. The sequence is that of Ribonuclease Z from Synechococcus sp. (strain CC9311).